The chain runs to 440 residues: Transposon Ty1-BR Gag polyprotein (440 aa).

Composition is skewed to polar residues over residues 1 to 10 (MESQQLSNYP), 48 to 60 (TKANSQQTTTPAS), and 127 to 152 (QSQFPQYPSSVGTPLSTPSPESGNTF). 3 disordered regions span residues 1 to 93 (MESQ…MMTQ), 126 to 173 (PQSQ…RPPP), and 352 to 440 (GSRN…PETY). Over residues 153–165 (TDSSSADSDMTST) the composition is skewed to low complexity. Residues 299 to 401 (NNGIHINNKV…NSKSKTARAH (103 aa)) are RNA-binding. A compositionally biased stretch (low complexity) spans 402-418 (NVSTSNNSPSTDNDSIS). Serine 416 carries the phosphoserine modification. Residues 419–428 (KSTTEPIQLN) are compositionally biased toward polar residues. A compositionally biased stretch (basic and acidic residues) spans 429 to 440 (NKHDLHLRPETY).

In terms of assembly, homotrimer.

It is found in the cytoplasm. Capsid protein (CA) is the structural component of the virus-like particle (VLP), forming the shell that encapsulates the retrotransposons dimeric RNA genome. The particles are assembled from trimer-clustered units and there are holes in the capsid shells that allow for the diffusion of macromolecules. CA also has nucleocapsid-like chaperone activity, promoting primer tRNA(i)-Met annealing to the multipartite primer-binding site (PBS), dimerization of Ty1 RNA and initiation of reverse transcription. In Saccharomyces cerevisiae (strain ATCC 204508 / S288c) (Baker's yeast), this protein is Transposon Ty1-BR Gag polyprotein (TY1A-BR).